The sequence spans 557 residues: Prosaposin (557 aa).

The signal sequence occupies residues 1–16; sequence MYALALFASLLATALT. Residues 17 to 59 constitute a propeptide that is removed on maturation; it reads SPVQDPKTCSGGSAVLCRDVKTAVDCGAVKHCQQMVWSKPTAK. A Saposin A-type 1 domain is found at 18 to 58; that stretch reads PVQDPKTCSGGSAVLCRDVKTAVDCGAVKHCQQMVWSKPTA. 4 consecutive Saposin B-type domains span residues 59-142, 193-277, 313-394, and 438-519; these read KSLP…QSLQ, NEDV…NEVK, NVIL…AARP, and NGGF…PSAY. Disulfide bonds link Cys63–Cys138, Cys66–Cys132, and Cys94–Cys106. The N-linked (GlcNAc...) asparagine glycan is linked to Asn80. The propeptide occupies 143–193; it reads EYLAEQNQKQLESNKIPEVDMARVVAPFMSNIPLLLYPQDHPRSQPQPKAN. 3 disulfide bridges follow: Cys197–Cys273, Cys200–Cys267, and Cys229–Cys240. Asn214 is a glycosylation site (N-linked (GlcNAc...) asparagine). Residues 277–312 constitute a propeptide that is removed on maturation; the sequence is KRVPMKTLVPATETIKNILPALEMMDPYEQNLVQAH. Intrachain disulfides connect Cys317-Cys390, Cys320-Cys384, and Cys348-Cys359. A glycan (N-linked (GlcNAc...) asparagine) is linked at Asn334. Positions 393 to 437 are excised as a propeptide; it reads RPELVEALEQPAPAIVSALLKEPTPPKQPAQPKQSALPAHVPPQK. 3 cysteine pairs are disulfide-bonded: Cys442/Cys515, Cys445/Cys509, and Cys473/Cys484. N-linked (GlcNAc...) asparagine glycosylation occurs at Asn459. The propeptide occupies 520–557; that stretch reads KLLLGTEKCVWGPSYWCQNMETAARCNAVDHCKRHVWN. The 37-residue stretch at 521-557 folds into the Saposin A-type 2 domain; that stretch reads LLLGTEKCVWGPSYWCQNMETAARCNAVDHCKRHVWN.

Saposin-B is a homodimer. Prosaposin exists as a roughly half-half mixture of monomers and disulfide-linked dimers. Monomeric prosaposin interacts (via C-terminus) with sortilin/SORT1, the interaction is required for targeting to lysosomes. Interacts with GRN; facilitates lysosomal delivery of progranulin from the extracellular space and the biosynthetic pathway.

Its subcellular location is the secreted. It is found in the lysosome. Its function is as follows. Behaves as a myelinotrophic and neurotrophic factor, these effects are mediated by its G-protein-coupled receptors, GPR37 and GPR37L1, undergoing ligand-mediated internalization followed by ERK phosphorylation signaling. Functionally, saposin-A and saposin-C stimulate the hydrolysis of glucosylceramide by beta-glucosylceramidase (EC 3.2.1.45) and galactosylceramide by beta-galactosylceramidase (EC 3.2.1.46). Saposin-C apparently acts by combining with the enzyme and acidic lipid to form an activated complex, rather than by solubilizing the substrate. In terms of biological role, saposin-B stimulates the hydrolysis of galacto-cerebroside sulfate by arylsulfatase A (EC 3.1.6.8), GM1 gangliosides by beta-galactosidase (EC 3.2.1.23) and globotriaosylceramide by alpha-galactosidase A (EC 3.2.1.22). Saposin-B forms a solubilizing complex with the substrates of the sphingolipid hydrolases. Saposin-D is a specific sphingomyelin phosphodiesterase activator (EC 3.1.4.12). Its function is as follows. Saposins are specific low-molecular mass non-enzymatic proteins, they participate in the lysosomal degradation of sphingolipids, which takes place by the sequential action of specific hydrolases. The polypeptide is Prosaposin (Psap) (Mus musculus (Mouse)).